Here is a 172-residue protein sequence, read N- to C-terminus: MRSSLSFVGFMGSGKTSIGKRISLFFNIPFLDLDEYIEKKLKKSISDIFIEKGEEYFRNIETESLREAFSLYPKIVLSTGGGVVLREENRRILREKSKVIYLKGEFENLMKHLENKEEHEKRPLLKKGREELYNLWKKRLPLYESCADIIVEVDNKDIDEITFEIIERLRDD.

Residue 12 to 17 (GSGKTS) participates in ATP binding. A Mg(2+)-binding site is contributed by threonine 16. Residues aspartate 34, arginine 58, and glycine 81 each contribute to the substrate site. ATP is bound at residue arginine 122. Arginine 139 is a binding site for substrate.

The protein belongs to the shikimate kinase family. Monomer. It depends on Mg(2+) as a cofactor.

It localises to the cytoplasm. The catalysed reaction is shikimate + ATP = 3-phosphoshikimate + ADP + H(+). The protein operates within metabolic intermediate biosynthesis; chorismate biosynthesis; chorismate from D-erythrose 4-phosphate and phosphoenolpyruvate: step 5/7. Functionally, catalyzes the specific phosphorylation of the 3-hydroxyl group of shikimic acid using ATP as a cosubstrate. The chain is Shikimate kinase from Dictyoglomus turgidum (strain DSM 6724 / Z-1310).